The following is a 338-amino-acid chain: Anthranilate phosphoribosyltransferase (338 aa).

5-phospho-alpha-D-ribose 1-diphosphate is bound by residues G81, 84 to 85 (GD), T89, 91 to 94 (NIST), 109 to 117 (KHGNRALSS), and A121. Residue G81 coordinates anthranilate. S93 contributes to the Mg(2+) binding site. Residue N112 participates in anthranilate binding. Position 167 (R167) interacts with anthranilate. Positions 225 and 226 each coordinate Mg(2+).

Belongs to the anthranilate phosphoribosyltransferase family. In terms of assembly, homodimer. The cofactor is Mg(2+).

The catalysed reaction is N-(5-phospho-beta-D-ribosyl)anthranilate + diphosphate = 5-phospho-alpha-D-ribose 1-diphosphate + anthranilate. It participates in amino-acid biosynthesis; L-tryptophan biosynthesis; L-tryptophan from chorismate: step 2/5. Its function is as follows. Catalyzes the transfer of the phosphoribosyl group of 5-phosphorylribose-1-pyrophosphate (PRPP) to anthranilate to yield N-(5'-phosphoribosyl)-anthranilate (PRA). This is Anthranilate phosphoribosyltransferase from Rhizobium etli (strain CIAT 652).